The sequence spans 295 residues: MTTAAELRAESARLLAAKGGNSQGLVPTMGALHSGHAALARTAVAENDVVVATIFVNPLQFGDAVDLDRYPRTLDADMALLDAEGVDLVFAPSVDEVYPGGQPLVRVTSGPLGEKWEGASRPGHFDGALTVVAKLLHYGLPGGAAADGTTAAYRAYFGQKDAQQLALVKRMVSDLNFPVEIIPVPIVRSEDGLALSSRNRFLSDAERDAALVLSRALRLIESRANAHEPLHLDSAVALVESQPLVELDYFDVVDPATLEPLAENCKETPFRGEGLAIIAAKVGAVRLIDNAPLFS.

29 to 36 lines the ATP pocket; that stretch reads MGALHSGH. His-36 functions as the Proton donor in the catalytic mechanism. Gln-60 is a (R)-pantoate binding site. Gln-60 is a beta-alanine binding site. 158-161 is a binding site for ATP; sequence GQKD. Gln-164 is a binding site for (R)-pantoate. Residues Val-187 and 195-198 contribute to the ATP site; that span reads LSSR.

The protein belongs to the pantothenate synthetase family. As to quaternary structure, homodimer.

Its subcellular location is the cytoplasm. It catalyses the reaction (R)-pantoate + beta-alanine + ATP = (R)-pantothenate + AMP + diphosphate + H(+). It functions in the pathway cofactor biosynthesis; (R)-pantothenate biosynthesis; (R)-pantothenate from (R)-pantoate and beta-alanine: step 1/1. Its function is as follows. Catalyzes the condensation of pantoate with beta-alanine in an ATP-dependent reaction via a pantoyl-adenylate intermediate. In Paenarthrobacter aurescens (strain TC1), this protein is Pantothenate synthetase.